A 400-amino-acid polypeptide reads, in one-letter code: Glutamyl-tRNA reductase (400 aa).

Substrate is bound by residues 45–48 (TCNR), serine 103, 108–110 (EDQ), and glutamine 114. The Nucleophile role is filled by cysteine 46. An NADP(+)-binding site is contributed by 179 to 184 (GYGEIG).

This sequence belongs to the glutamyl-tRNA reductase family. Homodimer.

The enzyme catalyses (S)-4-amino-5-oxopentanoate + tRNA(Glu) + NADP(+) = L-glutamyl-tRNA(Glu) + NADPH + H(+). It functions in the pathway porphyrin-containing compound metabolism; protoporphyrin-IX biosynthesis; 5-aminolevulinate from L-glutamyl-tRNA(Glu): step 1/2. Functionally, catalyzes the NADPH-dependent reduction of glutamyl-tRNA(Glu) to glutamate 1-semialdehyde (GSA). The protein is Glutamyl-tRNA reductase of Clostridium perfringens (strain ATCC 13124 / DSM 756 / JCM 1290 / NCIMB 6125 / NCTC 8237 / Type A).